The sequence spans 309 residues: Olfactory receptor 5AC2 (309 aa).

The Extracellular portion of the chain corresponds to 1 to 27 (MDISEGNKTLVTEFVLTGLTDRPWLHV). A glycan (N-linked (GlcNAc...) asparagine) is linked at asparagine 7. A helical membrane pass occupies residues 28–48 (LFFVVFLVVYLITMVGNLGLI). At 49 to 56 (VLIWNDPH) the chain is on the cytoplasmic side. Residues 57 to 77 (LHMPMYLFLGGLAFSDACTST) form a helical membrane-spanning segment. The Extracellular portion of the chain corresponds to 78–101 (SITPRMLVNFLDKTAMISLAECIT). Cysteine 99 and cysteine 191 are oxidised to a cystine. A helical membrane pass occupies residues 102–122 (QFYFFASSATTECFLLVMMAY). Topologically, residues 123–135 (DRYVAICNPLLYP) are cytoplasmic. Residues 136-156 (VMMSNKLSAQLLSISYVIGFL) traverse the membrane as a helical segment. Residues 157–198 (HPLVHVSLLLRLTFCRFNIIHYFYCEILQLFKISCNGPSINA) are Extracellular-facing. A helical transmembrane segment spans residues 199–219 (LMIFIFGAFIQIPTLMTIIIS). Over 220–239 (YTRVLFDILKKKSEKGRSKA) the chain is Cytoplasmic. Residues 240-260 (FSTCGAHLLSVSLYYGTLIFM) traverse the membrane as a helical segment. The Extracellular portion of the chain corresponds to 261 to 273 (YVRPASGLAEDQD). A helical transmembrane segment spans residues 274–294 (KVYSLFYTIIIPLLNPFIYSL). The Cytoplasmic segment spans residues 295 to 309 (RNKKVMHALRRVIRK).

This sequence belongs to the G-protein coupled receptor 1 family.

The protein resides in the cell membrane. In terms of biological role, odorant receptor. This chain is Olfactory receptor 5AC2 (OR5AC2), found in Homo sapiens (Human).